Consider the following 282-residue polypeptide: Snake venom serine protease NaSP (282 aa).

A signal peptide spans M1–S18. Positions K19 to L56 are excised as a propeptide. N-linked (GlcNAc...) asparagine glycosylation is found at N41 and N45. Residues I57–A280 enclose the Peptidase S1 domain. Disulfide bonds link C63/C195, C82/C98, C174/C241, C206/C220, and C231/C256. The active-site Charge relay system is the H97. The N-linked (GlcNAc...) asparagine glycan is linked to N135. D142 acts as the Charge relay system in catalysis. Residues N149 and N153 are each glycosylated (N-linked (GlcNAc...) asparagine). S235 serves as the catalytic Charge relay system.

It belongs to the peptidase S1 family. Snake venom subfamily. In terms of assembly, monomer. As to expression, expressed by the venom gland.

It is found in the secreted. Its function is as follows. Snake venom serine protease that may act in the hemostasis system of the prey. This chain is Snake venom serine protease NaSP, found in Naja atra (Chinese cobra).